The sequence spans 662 residues: Junctophilin-1 (662 aa).

Residues 1 to 640 (MTGGRFDFDD…EREANSGPNS (640 aa)) are Cytoplasmic-facing. MORN repeat units lie at residues 14 to 36 (YCGG…KGQG), 38 to 59 (YSGS…SGNT), 60 to 82 (YQGY…KWMY), 106 to 128 (YEGT…DGGT), and 129 to 151 (YQGQ…PYGM). Phosphoserine occurs at positions 157, 216, and 220. Residues 228–247 (SKSSISSKRSSVRSDAAMSR) are disordered. MORN repeat units follow at residues 281–303 (YMGE…NGMK) and 304–326 (YEGE…DGSK). Positions 432–443 (VDAKENPEEKVP) are enriched in basic and acidic residues. The segment at 432-634 (VDAKENPEEK…DSCPSMEREA (203 aa)) is disordered. Residue Thr-448 is modified to Phosphothreonine. A Phosphoserine modification is found at Ser-452. Position 461 is a phosphothreonine (Thr-461). Residues Ser-465, Ser-469, and Ser-475 each carry the phosphoserine modification. Low complexity predominate over residues 584–599 (KPSPNKWSPPKSVTKP). Over residues 600–614 (VAKESKAEPKAKKSE) the composition is skewed to basic and acidic residues. A helical; Anchor for type IV membrane protein transmembrane segment spans residues 641 to 661 (VMIVLVMLLNIGLAILFVHFL).

This sequence belongs to the junctophilin family.

It is found in the cell membrane. The protein localises to the endoplasmic reticulum membrane. It localises to the sarcoplasmic reticulum membrane. Junctophilins contribute to the formation of junctional membrane complexes (JMCs) which link the plasma membrane with the endoplasmic or sarcoplasmic reticulum in excitable cells. Provides a structural foundation for functional cross-talk between the cell surface and intracellular calcium release channels. JPH1 contributes to the construction of the skeletal muscle triad by linking the t-tubule (transverse-tubule) and SR (sarcoplasmic reticulum) membranes. The protein is Junctophilin-1 (JPH1) of Oryctolagus cuniculus (Rabbit).